The primary structure comprises 331 residues: Pectinesterase (331 aa).

The signal sequence occupies residues 1 to 17 (MVKSVLASALFAVSALA). A substrate-binding site is contributed by Q139. The active-site Proton donor is D162. The active-site Nucleophile is the D183. Residues R248 and W250 each coordinate substrate.

It belongs to the pectinesterase family.

It localises to the secreted. It carries out the reaction [(1-&gt;4)-alpha-D-galacturonosyl methyl ester](n) + n H2O = [(1-&gt;4)-alpha-D-galacturonosyl](n) + n methanol + n H(+). It participates in glycan metabolism; pectin degradation; 2-dehydro-3-deoxy-D-gluconate from pectin: step 1/5. Involved in maceration and soft-rotting of plant tissue. The sequence is that of Pectinesterase (pme1) from Aspergillus aculeatus.